Reading from the N-terminus, the 162-residue chain is Peptidyl-prolyl cis-trans isomerase (162 aa).

The PPIase cyclophilin-type domain maps to 16–162 (KTAYATIKTN…IESVVFSPSL (147 aa)).

It belongs to the cyclophilin-type PPIase family.

It carries out the reaction [protein]-peptidylproline (omega=180) = [protein]-peptidylproline (omega=0). PPIases accelerate the folding of proteins. It catalyzes the cis-trans isomerization of proline imidic peptide bonds in oligopeptides. The sequence is that of Peptidyl-prolyl cis-trans isomerase (ppiA) from Helicobacter pylori (strain J99 / ATCC 700824) (Campylobacter pylori J99).